A 454-amino-acid chain; its full sequence is Alkaline extracellular protease (454 aa).

Residues 1-15 (MKLATAFTILTAVLA) form the signal peptide. Positions 16–157 (APLAAPAPAP…EIPASSNAKR (142 aa)) are excised as a propeptide. Residues 68 to 146 (FIVVFDSSAT…TVEPDTIVSL (79 aa)) form the Inhibitor I9 domain. Residue Asn123 is glycosylated (N-linked (GlcNAc...) asparagine). The Peptidase S8 domain maps to 166 to 454 (QWGLSRISHK…NAVAYNGVGI (289 aa)). Residues Asp200, His231, and Ser397 each act as charge relay system in the active site.

It belongs to the peptidase S8 family. In terms of processing, the pro-region is removed through cleavage by XPR6 after Lys156-Arg157, which yields mature active XPR2. The 10 consecutive -X-Ala- or -X-Pro- dipeptides located over 100 amino acids upstream of the N-terminal of mature XPR2 are subject to dipeptidyl aminopeptidase (DPAPase)-processing. DPAPase activity is not necessary for XPR6 cleavage and for secretion of mature active XPR2. Post-translationally, N-glycosylated. Glycosylation within the pro-region has no effect on secretion and maturation at 18 degrees Celsius, but is required for secretion at 28 degrees Celsius.

The protein localises to the secreted. It carries out the reaction Hydrolysis of proteins with broad specificity for peptide bonds, and a preference for a large uncharged residue in P1. Hydrolyzes peptide amides.. The protease activity is completely inhibited by the serine inhibitor PMSF but is not affected by thiol group inhibitors and in the presence of dithiothreitol. In the presence of high concentrations of o-phenanthroline the protease activity is only partially inhibited. The pro-region plays an inhibitory role and may provide a mechanism for preventing premature activation in the secretory pathway. Major secreted protein that belongs to the subtilisin family serine proteases. The polypeptide is Alkaline extracellular protease (Yarrowia lipolytica (strain CLIB 122 / E 150) (Yeast)).